Consider the following 577-residue polypeptide: Optineurin (577 aa).

Disordered regions lie at residues 1-32 and 101-143; these read MSHQ…HPNL and SHEN…KDQL. Positions 38–170 form a coiled coil; that stretch reads EELLQQMKEL…VSELQLKLNS (133 aa). An interaction with Rab8 region spans residues 58–209; it reads MKLNNQAMKG…GPTRTVSTGT (152 aa). The LIR signature appears at 176–181; the sequence is DSFVEI. S177 is modified (phosphoserine; by TBK1). The span at 186–197 shows a compositional bias: basic and acidic residues; that stretch reads GEAEGSVKEIKH. Disordered regions lie at residues 186–209 and 261–297; these read GEAE…STGT and VSDF…TVGS. S198 is subject to Phosphoserine. A coiled-coil region spans residues 239 to 508; the sequence is CLREGNQKVE…LLKENDAFED (270 aa). Composition is skewed to basic and acidic residues over residues 261–274 and 281–292; these read VSDF…RSEI and STEKENDEEKGP. S342 is modified (phosphoserine). An interaction with HD region spans residues 411-577; the sequence is TRKESEKVDR…LQIHVMDCII (167 aa). The segment at 412–520 is interaction with MYO6; the sequence is RKESEKVDRA…RQSLMEMQSR (109 aa). The short motif at 474 to 479 is the UBAN element; it reads DFHAER. Residue S526 is modified to Phosphoserine. Residues 547-577 form a CCHC NOA-type zinc finger; sequence QRNIPIHSCPKCGEVLPDIDTLQIHVMDCII. 4 residues coordinate Zn(2+): C555, C558, H571, and C575.

Self-associates. Interacts with HD. Interacts with GTF3A. Interacts with MYO6. Interacts (via UBAN) with ubiquitinated TFRC. Interacts with GTP-bound Rab8 (RAB8A and/or RAB8B). Interacts with TBC1D17. Interacts with TBK1. Interacts with TRAF3. Binds to linear ubiquitin chains. Interacts with LC3 family members MAP1LC3A, MAP1LC3B, GABARAP, GABARAPL1 and GABARAPL2; OPTN phosphorylation increases the association (at least with MAP1LC3B). Interacts with RAB12; the interaction may be indirect. Interacts with TBK1; this interaction leads to the Golgi localization of TBK1 and its subsequent activation. Interacts with palmitoyltransferase ZDHHC17/HIP14; the interaction does not lead to palmitoylation of OPTN. Interacts with CYLD. Interacts with TOM1; the interaction is indirect and is mediated by MYO6, which acts as a bridge between TOM1 and OPTN. Interacts with USP12; the interaction is independent of USP12 deubiquitinase activity and may be involved in regulation of autophagic flux. As to quaternary structure, (Microbial infection) Interacts with E3 14.7 kDa protein of group C human adenovirus. Interacts with Bluetongue virus protein NS3. In terms of processing, phosphorylated by TBK1, leading to restrict bacterial proliferation in case of infection. Phosphorylation is induced by phorbol esters and decreases its half-time. In terms of tissue distribution, present in aqueous humor of the eye (at protein level). Expressed in the trabecular meshwork (at protein level). Expressed in nonpigmented ciliary epithelium (at protein level). Expressed at high levels in skeletal muscle, also detected in heart, brain, pancreas, kidney, placenta and liver. Expressed in dermal fibroblasts (at protein level).

Its subcellular location is the cytoplasm. It is found in the perinuclear region. The protein resides in the golgi apparatus. The protein localises to the trans-Golgi network. It localises to the cytoplasmic vesicle. Its subcellular location is the autophagosome. It is found in the recycling endosome. Functionally, plays an important role in the maintenance of the Golgi complex, in membrane trafficking, in exocytosis, through its interaction with myosin VI and Rab8. Links myosin VI to the Golgi complex and plays an important role in Golgi ribbon formation. Plays a role in the activation of innate immune response during viral infection. Mechanistically, recruits TBK1 at the Golgi apparatus, promoting its trans-phosphorylation after RLR or TLR3 stimulation. In turn, activated TBK1 phosphorylates its downstream partner IRF3 to produce IFN-beta/IFNB1. Plays a neuroprotective role in the eye and optic nerve. May act by regulating membrane trafficking and cellular morphogenesis via a complex that contains Rab8 and huntingtin (HD). Mediates the interaction of Rab8 with the probable GTPase-activating protein TBC1D17 during Rab8-mediated endocytic trafficking, such as that of transferrin receptor (TFRC/TfR); regulates Rab8 recruitment to tubules emanating from the endocytic recycling compartment. Autophagy receptor that interacts directly with both the cargo to become degraded and an autophagy modifier of the MAP1 LC3 family; targets ubiquitin-coated bacteria (xenophagy), such as cytoplasmic Salmonella enterica, and appears to function in the same pathway as SQSTM1 and CALCOCO2/NDP52. (Microbial infection) May constitute a cellular target for various viruses, such as adenovirus E3 14.7 or Bluetongue virus, to inhibit innate immune response. During RNA virus infection, such as that of Sendai virus, negatively regulates the induction of IFNB1. In Homo sapiens (Human), this protein is Optineurin (OPTN).